The sequence spans 172 residues: Low molecular mass early light-inducible protein HV90, chloroplastic (172 aa).

Residues 1–38 (MATMMSMSSFAGAAVVPRSSASSFGARSLPALGRRALV) constitute a chloroplast transit peptide. 2 consecutive transmembrane segments (helical) span residues 106 to 126 (GQAW…VPLL) and 150 to 170 (FAML…APFI).

It belongs to the ELIP/psbS family.

The protein localises to the plastid. The protein resides in the chloroplast membrane. In terms of biological role, probably involved in the integration of pigments into the mature pigment-protein complexes. The protein is Low molecular mass early light-inducible protein HV90, chloroplastic of Hordeum vulgare (Barley).